Consider the following 34-residue polypeptide: Potassium channel toxin (34 aa).

3 cysteine pairs are disulfide-bonded: Cys6–Cys25, Cys11–Cys29, and Cys15–Cys31.

It belongs to the short scorpion toxin superfamily. Potassium channel inhibitor family. Alpha-KTx 21 subfamily. As to expression, expressed by the venom gland.

It localises to the secreted. Functionally, toxin that blocks voltage-gated potassium channels (Kv). The sequence is that of Potassium channel toxin from Tityus metuendus (Scorpion).